Reading from the N-terminus, the 81-residue chain is Photosystem I iron-sulfur center (81 aa).

4Fe-4S ferredoxin-type domains follow at residues 2–31 (SHSV…MVPW) and 39–68 (IASS…IRVY). Cys-11, Cys-14, Cys-17, Cys-21, Cys-48, Cys-51, Cys-54, and Cys-58 together coordinate [4Fe-4S] cluster.

The G.violaceus PSI reaction center is composed of one copy each of PsaA,B,C,D,E,F,L,M and Z, and forms trimeric complexes. The cofactor is [4Fe-4S] cluster.

The protein resides in the cell inner membrane. It catalyses the reaction reduced [plastocyanin] + hnu + oxidized [2Fe-2S]-[ferredoxin] = oxidized [plastocyanin] + reduced [2Fe-2S]-[ferredoxin]. Functionally, apoprotein for the two 4Fe-4S centers FA and FB of photosystem I (PSI); essential for photochemical activity. FB is the terminal electron acceptor of PSI, donating electrons to ferredoxin. The C-terminus interacts with PsaA/B/D and helps assemble the protein into the PSI complex. Required for binding of PsaD and PsaE to PSI. PSI is a plastocyanin/cytochrome c6-ferredoxin oxidoreductase, converting photonic excitation into a charge separation, which transfers an electron from the donor P700 chlorophyll pair to the spectroscopically characterized acceptors A0, A1, FX, FA and FB in turn. This Gloeobacter violaceus (strain ATCC 29082 / PCC 7421) protein is Photosystem I iron-sulfur center.